Here is a 111-residue protein sequence, read N- to C-terminus: Large ribosomal subunit protein uL22 (111 aa).

It belongs to the universal ribosomal protein uL22 family. In terms of assembly, part of the 50S ribosomal subunit.

Its function is as follows. This protein binds specifically to 23S rRNA; its binding is stimulated by other ribosomal proteins, e.g. L4, L17, and L20. It is important during the early stages of 50S assembly. It makes multiple contacts with different domains of the 23S rRNA in the assembled 50S subunit and ribosome. Functionally, the globular domain of the protein is located near the polypeptide exit tunnel on the outside of the subunit, while an extended beta-hairpin is found that lines the wall of the exit tunnel in the center of the 70S ribosome. The chain is Large ribosomal subunit protein uL22 from Mycoplasma capricolum subsp. capricolum (strain California kid / ATCC 27343 / NCTC 10154).